The sequence spans 449 residues: tRNA-2-methylthio-N(6)-dimethylallyladenosine synthase (449 aa).

In terms of domain architecture, MTTase N-terminal spans 4–119; it reads RTFHIETFGC…APQALDRLVE (116 aa). Residues cysteine 13, cysteine 48, cysteine 82, cysteine 158, cysteine 162, and cysteine 165 each coordinate [4Fe-4S] cluster. The Radical SAM core domain occupies 144-375; sequence GAVPASVFVN…QTLQNRLTER (232 aa). The TRAM domain occupies 378–446; that stretch reads QDMVGRKVEV…KHSLLAEQAG (69 aa).

The protein belongs to the methylthiotransferase family. MiaB subfamily. In terms of assembly, monomer. [4Fe-4S] cluster is required as a cofactor.

It localises to the cytoplasm. It catalyses the reaction N(6)-dimethylallyladenosine(37) in tRNA + (sulfur carrier)-SH + AH2 + 2 S-adenosyl-L-methionine = 2-methylsulfanyl-N(6)-dimethylallyladenosine(37) in tRNA + (sulfur carrier)-H + 5'-deoxyadenosine + L-methionine + A + S-adenosyl-L-homocysteine + 2 H(+). In terms of biological role, catalyzes the methylthiolation of N6-(dimethylallyl)adenosine (i(6)A), leading to the formation of 2-methylthio-N6-(dimethylallyl)adenosine (ms(2)i(6)A) at position 37 in tRNAs that read codons beginning with uridine. The chain is tRNA-2-methylthio-N(6)-dimethylallyladenosine synthase from Nitratidesulfovibrio vulgaris (strain ATCC 29579 / DSM 644 / CCUG 34227 / NCIMB 8303 / VKM B-1760 / Hildenborough) (Desulfovibrio vulgaris).